Consider the following 643-residue polypeptide: Phosphomethylpyrimidine synthase (643 aa).

Substrate contacts are provided by residues asparagine 248, methionine 277, tyrosine 306, histidine 342, 362-364, 403-406, and glutamate 442; these read SRG and DGLR. Histidine 446 provides a ligand contact to Zn(2+). Position 469 (tyrosine 469) interacts with substrate. Histidine 510 contributes to the Zn(2+) binding site. [4Fe-4S] cluster-binding residues include cysteine 590, cysteine 593, and cysteine 598.

It belongs to the ThiC family. Homodimer. Requires [4Fe-4S] cluster as cofactor.

The catalysed reaction is 5-amino-1-(5-phospho-beta-D-ribosyl)imidazole + S-adenosyl-L-methionine = 4-amino-2-methyl-5-(phosphooxymethyl)pyrimidine + CO + 5'-deoxyadenosine + formate + L-methionine + 3 H(+). Its pathway is cofactor biosynthesis; thiamine diphosphate biosynthesis. In terms of biological role, catalyzes the synthesis of the hydroxymethylpyrimidine phosphate (HMP-P) moiety of thiamine from aminoimidazole ribotide (AIR) in a radical S-adenosyl-L-methionine (SAM)-dependent reaction. The sequence is that of Phosphomethylpyrimidine synthase from Burkholderia ambifaria (strain MC40-6).